The following is a 293-amino-acid chain: 4-hydroxy-tetrahydrodipicolinate synthase (293 aa).

T45 contacts pyruvate. Residue Y133 is the Proton donor/acceptor of the active site. Residue K161 is the Schiff-base intermediate with substrate of the active site. I203 is a binding site for pyruvate.

The protein belongs to the DapA family. As to quaternary structure, homotetramer; dimer of dimers.

Its subcellular location is the cytoplasm. It catalyses the reaction L-aspartate 4-semialdehyde + pyruvate = (2S,4S)-4-hydroxy-2,3,4,5-tetrahydrodipicolinate + H2O + H(+). It functions in the pathway amino-acid biosynthesis; L-lysine biosynthesis via DAP pathway; (S)-tetrahydrodipicolinate from L-aspartate: step 3/4. In terms of biological role, catalyzes the condensation of (S)-aspartate-beta-semialdehyde [(S)-ASA] and pyruvate to 4-hydroxy-tetrahydrodipicolinate (HTPA). This is 4-hydroxy-tetrahydrodipicolinate synthase from Aliivibrio fischeri (strain ATCC 700601 / ES114) (Vibrio fischeri).